A 282-amino-acid polypeptide reads, in one-letter code: Glutamate--LysW ligase ArgX (282 aa).

ATP-binding positions include Lys-87, Lys-127, 131–137 (GSWGRLV), and 167–178 (QEYIQYKGRDIR). The ATP-grasp domain maps to 91-277 (YSKLYREGIP…VAQKLVEYIK (187 aa)). Position 192 (Arg-192) interacts with substrate. An ATP-binding site is contributed by Asn-202. 203 to 204 (VA) lines the substrate pocket. Mg(2+)-binding residues include Asp-237, Glu-250, and Asn-252. Residue 256 to 260 (EFKGF) coordinates substrate. Residues 259–260 (GF) carry the GF motif that is essential for ArgX substrate specificity motif.

It belongs to the RimK family. LysX subfamily. As to quaternary structure, homotetramer. Interacts with LysW. It depends on Mg(2+) as a cofactor.

It carries out the reaction [amino-group carrier protein]-C-terminal-L-glutamate + L-glutamate + ATP = [amino-group carrier protein]-C-terminal-gamma-(L-glutamyl)-L-glutamate + ADP + phosphate + H(+). It participates in amino-acid biosynthesis; L-arginine biosynthesis. In terms of biological role, catalyzes the ATP-dependent formation of a covalent bond between the amino group of glutamate and the gamma-carboxyl group of the C-terminal glutamate residue in LysW. This is Glutamate--LysW ligase ArgX from Sulfurisphaera tokodaii (strain DSM 16993 / JCM 10545 / NBRC 100140 / 7) (Sulfolobus tokodaii).